Consider the following 557-residue polypeptide: Potassium-transporting ATPase potassium-binding subunit (557 aa).

The next 12 membrane-spanning stretches (helical) occupy residues 5–25 (GFLL…PLGS), 63–83 (LCAI…MLLG), 132–152 (GLTV…FALI), 170–190 (LLRI…LFFI), 253–273 (FVQM…FGEV), 283–303 (LLWA…WAEV), 329–349 (VLVS…AVIA), 356–376 (ALGG…FGGV), 379–399 (GLYG…LMIG), 416–436 (LTAL…ALAM), 484–504 (LLAF…MAIA), and 526–546 (LFVG…FIPA).

Belongs to the KdpA family. The system is composed of three essential subunits: KdpA, KdpB and KdpC.

It is found in the cell inner membrane. In terms of biological role, part of the high-affinity ATP-driven potassium transport (or Kdp) system, which catalyzes the hydrolysis of ATP coupled with the electrogenic transport of potassium into the cytoplasm. This subunit binds the periplasmic potassium ions and delivers the ions to the membrane domain of KdpB through an intramembrane tunnel. This is Potassium-transporting ATPase potassium-binding subunit from Escherichia coli O139:H28 (strain E24377A / ETEC).